The chain runs to 231 residues: Octanoyltransferase (231 aa).

One can recognise a BPL/LPL catalytic domain in the interval P29–P231. Residues R68–H75, A164–G166, and G177–A179 each bind substrate. C195 functions as the Acyl-thioester intermediate in the catalytic mechanism.

This sequence belongs to the LipB family.

Its subcellular location is the cytoplasm. It catalyses the reaction octanoyl-[ACP] + L-lysyl-[protein] = N(6)-octanoyl-L-lysyl-[protein] + holo-[ACP] + H(+). The protein operates within protein modification; protein lipoylation via endogenous pathway; protein N(6)-(lipoyl)lysine from octanoyl-[acyl-carrier-protein]: step 1/2. Its function is as follows. Catalyzes the transfer of endogenously produced octanoic acid from octanoyl-acyl-carrier-protein onto the lipoyl domains of lipoate-dependent enzymes. Lipoyl-ACP can also act as a substrate although octanoyl-ACP is likely to be the physiological substrate. This Verminephrobacter eiseniae (strain EF01-2) protein is Octanoyltransferase.